The following is a 375-amino-acid chain: ELAV-like protein 2 (375 aa).

RRM domains lie at 67 to 145 (TNLI…YARP), 153 to 233 (ANLY…FANN), and 292 to 370 (WCIF…FKTS).

This sequence belongs to the RRM elav family. In terms of assembly, part of a ribonucleoprotein (RNP) complex, at least composed of elavl1/elrA and/or elavl2/elrB, igf2bp3/vg1RBP, ddx6/Xp54, ybx2/frgy2, lsm14b/rap55b and, in a subset of RNP complexes, stau1/staufen. Binds RNA as a homooligomer.

The protein resides in the cytoplasm. The protein localises to the cell cortex. Its function is as follows. Binds to poly-U elements and AU-rich elements (AREs) in the 3'-UTR of target mRNAs. Required for the vegetal localization of vg1 mRNA. Probably required for nervous system development. This chain is ELAV-like protein 2, found in Xenopus tropicalis (Western clawed frog).